A 682-amino-acid polypeptide reads, in one-letter code: Methionine--tRNA ligase (682 aa).

Positions 15–25 (PYANGAIHLGH) match the 'HIGH' region motif. Positions 146, 149, 159, and 162 each coordinate Zn(2+). Positions 331 to 335 (KMSKS) match the 'KMSKS' region motif. Lys334 provides a ligand contact to ATP. Residues 580-682 (DFAKLDMRVA…SGVTAGMQVK (103 aa)) form the tRNA-binding domain.

This sequence belongs to the class-I aminoacyl-tRNA synthetase family. MetG type 1 subfamily. As to quaternary structure, homodimer. It depends on Zn(2+) as a cofactor.

The protein localises to the cytoplasm. The catalysed reaction is tRNA(Met) + L-methionine + ATP = L-methionyl-tRNA(Met) + AMP + diphosphate. Is required not only for elongation of protein synthesis but also for the initiation of all mRNA translation through initiator tRNA(fMet) aminoacylation. The polypeptide is Methionine--tRNA ligase (Haemophilus influenzae (strain PittEE)).